The sequence spans 66 residues: Ocellatin-PT2 (66 aa).

The first 22 residues, 1–22 (MAFLKKSLFLVLFLGLVSLSIC), serve as a signal peptide directing secretion. A propeptide spanning residues 23–39 (DEEKRQDEDDDDDDDEE) is cleaved from the precursor. Valine amide is present on Val-66.

Expressed by the skin glands.

It localises to the secreted. Its function is as follows. Has no antibacterial activity against Gram-negative bacteria E.coli ATCC 25922, S.pneumoniae ATCC 700603 and S.choleraesuis ATCC 14028 or against Gram-positive bacterium S.aureus ATCC 29313. Shows no hemolytic activity and no cytotoxicity. The chain is Ocellatin-PT2 from Leptodactylus pustulatus (Ceara white-lipped frog).